A 5263-amino-acid chain; its full sequence is Fibroin heavy chain (5263 aa).

The N-terminal stretch at 1 to 21 (MRVKTFVILCCALQYVAYTNA) is a signal peptide. The interval 149–5206 (AAVGAGAGAG…GSGAGAGGSV (5058 aa)) is highly repetitive. A disulfide bridge connects residues Cys5260 and Cys5263.

Silk fibroin elementary unit consists in a disulfide-linked heavy and light chain and a p25 glycoprotein in molar ratios of 6:6:1. This results in a complex of approximately 2.3 MDa. The interchain disulfide bridge is essential for the intracellular transport and secretion of fibroin. As to expression, produced exclusively in the posterior (PSG) section of silk glands, which are essentially modified salivary glands.

Its function is as follows. Core component of the silk filament; a strong, insoluble and chemically inert fiber. In Bombyx mori (Silk moth), this protein is Fibroin heavy chain (FIBH).